The sequence spans 322 residues: Glycerol-3-phosphate dehydrogenase [NAD(P)+] (322 aa).

Trp13, His33, and Lys99 together coordinate NADPH. Residues Lys99, Gly127, and Ser129 each contribute to the sn-glycerol 3-phosphate site. Ala131 provides a ligand contact to NADPH. Sn-glycerol 3-phosphate contacts are provided by Lys182, Asp235, Ser245, Arg246, and Asn247. Lys182 functions as the Proton acceptor in the catalytic mechanism. NADPH is bound at residue Arg246. Glu272 lines the NADPH pocket.

This sequence belongs to the NAD-dependent glycerol-3-phosphate dehydrogenase family.

The protein resides in the cytoplasm. The catalysed reaction is sn-glycerol 3-phosphate + NAD(+) = dihydroxyacetone phosphate + NADH + H(+). The enzyme catalyses sn-glycerol 3-phosphate + NADP(+) = dihydroxyacetone phosphate + NADPH + H(+). It functions in the pathway membrane lipid metabolism; glycerophospholipid metabolism. Catalyzes the reduction of the glycolytic intermediate dihydroxyacetone phosphate (DHAP) to sn-glycerol 3-phosphate (G3P), the key precursor for phospholipid synthesis. The sequence is that of Glycerol-3-phosphate dehydrogenase [NAD(P)+] from Ruthia magnifica subsp. Calyptogena magnifica.